A 399-amino-acid polypeptide reads, in one-letter code: Elongation factor Tu (399 aa).

Residues 10–209 (KPHVNIGTIG…EVDAYIPTPV (200 aa)) enclose the tr-type G domain. The G1 stretch occupies residues 19–26 (GHVDHGKT). 19 to 26 (GHVDHGKT) lines the GTP pocket. Residue Thr26 coordinates Mg(2+). Positions 60-64 (GITIA) are G2. Residues 81–84 (DCPG) form a G3 region. Residues 81–85 (DCPGH) and 136–139 (NKQD) contribute to the GTP site. Residues 136 to 139 (NKQD) form a G4 region. The tract at residues 174-176 (SAL) is G5.

It belongs to the TRAFAC class translation factor GTPase superfamily. Classic translation factor GTPase family. EF-Tu/EF-1A subfamily. Monomer.

It is found in the cytoplasm. It catalyses the reaction GTP + H2O = GDP + phosphate + H(+). GTP hydrolase that promotes the GTP-dependent binding of aminoacyl-tRNA to the A-site of ribosomes during protein biosynthesis. The sequence is that of Elongation factor Tu from Helicobacter acinonychis (strain Sheeba).